The chain runs to 299 residues: HTH-type transcriptional regulator ArgP (299 aa).

In terms of domain architecture, HTH lysR-type spans 4 to 60 (PDYRTLQALDAVIRERGFERAAQKLCITQSAVSQRIKQLENMFGQPLLVRTVPPRPT). Residues 21–40 (FERAAQKLCITQSAVSQRIK) constitute a DNA-binding region (H-T-H motif).

This sequence belongs to the LysR transcriptional regulatory family. Homodimer.

In terms of biological role, controls the transcription of genes involved in arginine and lysine metabolism. This is HTH-type transcriptional regulator ArgP from Erwinia tasmaniensis (strain DSM 17950 / CFBP 7177 / CIP 109463 / NCPPB 4357 / Et1/99).